The primary structure comprises 4303 residues: Polycystin-1 (4303 aa).

Positions 1–23 (MPPAAPARLALALGLGLWLGALA) are cleaved as a signal peptide. In terms of domain architecture, LRRNT spans 24 to 67 (GGPGRGCGPCEPPCLCGPAPGAACRVNCSGRGLRTLGPALRIPA). The Extracellular segment spans residues 24–3074 (GGPGRGCGPC…VFPEPTADVN (3051 aa)). N-linked (GlcNAc...) asparagine glycans are attached at residues asparagine 50 and asparagine 89. LRR repeat units lie at residues 68-91 (DATA…ANLS) and 92-113 (ALAE…IFAN). Residues asparagine 116 and asparagine 121 are each glycosylated (N-linked (GlcNAc...) asparagine). The LRRCT domain maps to 125-178 (NPFECDCGLAWLPRWAEEQQVRVVQPEAATCAGPGSLAGQPLLGIPLLDSGCGE). A WSC domain is found at 177–271 (GEEYVACLPD…PTLLQHVFPA (95 aa)). An N-linked (GlcNAc...) asparagine glycan is attached at asparagine 187. The PKD 1 domain occupies 272–359 (SPGATLVGPH…VQVEAAPAAL (88 aa)). A C-type lectin domain is found at 415-531 (GNGHCYRLVV…CSAPHSYVCE (117 aa)). 2 cysteine pairs are disulfide-bonded: cysteine 436-cysteine 530 and cysteine 508-cysteine 522. The disordered stretch occupies residues 616–635 (AGTPENGSEPESRSPDNRTQ). 2 N-linked (GlcNAc...) asparagine glycosylation sites follow: asparagine 621 and asparagine 632. The 34-residue stretch at 638-671 (PACMPGGRWCPGANICLPLDASCHPQACANGCTS) folds into the LDL-receptor class A; atypical domain. 3 disulfides stabilise this stretch: cysteine 640-cysteine 653, cysteine 647-cysteine 665, and cysteine 660-cysteine 669. A PKD 2 domain is found at 743 to 817 (LSANASSWLP…RHNLSCSFDV (75 aa)). Residues asparagine 746, asparagine 810, asparagine 841, asparagine 854, asparagine 890, asparagine 921, asparagine 1004, asparagine 1010, asparagine 1034, asparagine 1072, asparagine 1113, asparagine 1178, asparagine 1194, asparagine 1240, asparagine 1269, asparagine 1336, asparagine 1348, asparagine 1382, asparagine 1450, asparagine 1455, asparagine 1474, asparagine 1518, asparagine 1541, asparagine 1554, asparagine 1563, asparagine 1647, asparagine 1661, asparagine 1733, asparagine 1791, asparagine 1834, asparagine 1867, and asparagine 1880 are each glycosylated (N-linked (GlcNAc...) asparagine). PKD domains are found at residues 855–928 (ATAT…RVTA), 935–1020 (LRAT…NRMQ), 1023–1129 (QVST…LPSV), 1127–1215 (PSVA…LRGL), 1213–1298 (RGLS…EVLR), 1294–1383 (LEVL…VGNV), 1382–1469 (NVTL…VLVT), 1468–1551 (VTSI…VRGL), 1550–1635 (GLVV…IEGL), 1634–1721 (GLQV…VGWL), 1719–1805 (GWLM…VSGL), 1807–1890 (IRAS…IVGL), 1889–1974 (GLVL…VSGL), 1977–2057 (PNCC…VLEV), and 2060–2148 (AVQY…ACRE). N-linked (GlcNAc...) asparagine glycans are attached at residues asparagine 1991, asparagine 2050, asparagine 2074, asparagine 2125, asparagine 2248, asparagine 2353, asparagine 2395, asparagine 2412, asparagine 2567, asparagine 2578, asparagine 2645, asparagine 2718, asparagine 2754, asparagine 2841, asparagine 2878, asparagine 2925, asparagine 2956, and asparagine 2994. One can recognise an REJ domain in the interval 2146 to 2833 (CREPEVDVVL…QLIFLVDSNP (688 aa)). Positions 2862 to 3063 (PIERLASERA…SLFVPPSHVR (202 aa)) constitute a GAIN-B domain. A disulfide bridge connects residues cysteine 3015 and cysteine 3043. The segment at 3015–3063 (CQYFSEEDMVWRTEGLLPLEETSPRQAVCLTRHLTAFGASLFVPPSHVR) is GPS. The chain crosses the membrane as a helical span at residues 3075-3095 (YIVMLTCAVCLVTYMVMAAIL). Topologically, residues 3096 to 3277 (HKLDQLDASR…DRPPRSRFTR (182 aa)) are cytoplasmic. A PLAT domain is found at 3118–3233 (FKYEILVKTG…EANGGLVEKE (116 aa)). A helical membrane pass occupies residues 3278–3298 (IQRATCCVLLICLFLGANAVW). At 3299–3323 (YGAVGDSAYSTGHVSRLSPLSVDTV) the chain is on the extracellular side. The helical transmembrane segment at 3324–3344 (AVGLVSSVVVYPVYLAILFLF) threads the bilayer. At 3345–3559 (RMSRSKVAGS…LPAWCASLAH (215 aa)) the chain is on the cytoplasmic side. A helical transmembrane segment spans residues 3560–3580 (GLSLLLVAVAVAVSGWVGASF). Topologically, residues 3581-3582 (PP) are extracellular. Residues 3583 to 3603 (GVSVAWLLSSSASFLASFLGW) form a helical membrane-spanning segment. The Cytoplasmic portion of the chain corresponds to 3604–3665 (EPLKVLLEAL…LAKEEARKVK (62 aa)). The helical transmembrane segment at 3666–3686 (RLHGMLRSLLVYMLFLLVTLL) threads the bilayer. The Extracellular portion of the chain corresponds to 3687–3901 (ASYGDASCHG…RLSAGLSLPL (215 aa)). Asparagine 3738, asparagine 3790, and asparagine 3845 each carry an N-linked (GlcNAc...) asparagine glycan. The chain crosses the membrane as a helical span at residues 3902 to 3922 (LTSVCLLLFAVHFAVAEARTW). At 3923-3935 (HREGRWRVLRLGA) the chain is on the cytoplasmic side. A helical transmembrane segment spans residues 3936-3956 (WARWLLVALTAATALVRLAQL). Residues 3957–3984 (GAADRQWTRFVRGRPRRFTSFDQVAQLS) lie on the Extracellular side of the membrane. A helical transmembrane segment spans residues 3985 to 4005 (SAARGLAASLLFLLLVKAAQQ). The Cytoplasmic segment spans residues 4006–4027 (LRFVRQWSVFGKTLCRALPELL). A helical membrane pass occupies residues 4028–4048 (GVTLGLVVLGVAYAQLAILLV). The Extracellular segment spans residues 4049–4090 (SSCVDSLWSVAQALLVLCPGTGLSTLCPAESWHLSPLLCVGL). The helical transmembrane segment at 4091 to 4110 (WALRLWGALRLGAVILRWRY) threads the bilayer. Residues 4111–4303 (HALRGELYRP…AKNKVHPSST (193 aa)) are Cytoplasmic-facing. Disordered regions lie at residues 4160–4196 (PLPS…QLDG) and 4243–4303 (LHSL…PSST). At serine 4166 the chain carries Phosphoserine; by PRKX; in vitro. Residues 4185 to 4195 (SHPSTSSSQLD) are compositionally biased toward polar residues. A coiled-coil region spans residues 4220–4251 (EALLTQFDRLNQATEDVYQLEQQLHSLQGRRS). Over residues 4253–4269 (RAPAGSSRGPSPGLRPA) the composition is skewed to low complexity. Basic residues predominate over residues 4292–4303 (LRAKNKVHPSST).

The protein belongs to the polycystin family. In terms of assembly, component of the heterotetrameric polycystin channel complex with PKD2; the tetramer contains one PKD1 chain and three PKD2 chains. Interacts with PKD2; the interaction is required for ciliary localization. Interacts with PKD2L1. Interacts with PRKX; involved in differentiation and controlled morphogenesis of the kidney. Interacts (via extracellular domain) with WNT3A, WNT4, WNT5A and WNT9B. Interacts with DVL1 and DVL2. Interacts with NPHP1 (via SH3 domain). Interacts with BBS1, BBS4, BBS5 and TTC8. Interacts with RGS7. Interacts (via the PKD repeats in the N-terminal extracellular region) with EPCIP; the interaction is not dependent on N-glycosylation of either protein. In terms of processing, N-glycosylated. Post-translationally, after synthesis, undergoes cleavage between Leu-3048 and Thr-3049 in the GPS region of the GAIN-B domain. Cleavage at the GPS region occurs through a cis-autoproteolytic mechanism involving an ester-intermediate via N-O acyl rearrangement. This process takes place in the early secretory pathway, depends on initial N-glycosylation, and requires the REJ domain. There is evidence that cleavage at GPS region is incomplete. Uncleaved and cleaved products may have different functions in vivo.

The protein resides in the cell membrane. It is found in the cell projection. It localises to the cilium. Its subcellular location is the endoplasmic reticulum. The protein localises to the golgi apparatus. The protein resides in the vesicle. It is found in the secreted. It localises to the extracellular exosome. Its function is as follows. Component of a heteromeric calcium-permeable ion channel formed by PKD1 and PKD2 that is activated by interaction between PKD1 and a Wnt family member, such as WNT3A and WNT9B. Both PKD1 and PKD2 are required for channel activity. Involved in renal tubulogenesis. Involved in fluid-flow mechanosensation by the primary cilium in renal epithelium. Acts as a regulator of cilium length, together with PKD2. The dynamic control of cilium length is essential in the regulation of mechanotransductive signaling. The cilium length response creates a negative feedback loop whereby fluid shear-mediated deflection of the primary cilium, which decreases intracellular cAMP, leads to cilium shortening and thus decreases flow-induced signaling. May be an ion-channel regulator. Involved in adhesive protein-protein and protein-carbohydrate interactions. Likely to be involved with polycystin-1-interacting protein 1 in the detection, sequestration and exocytosis of senescent mitochondria. The chain is Polycystin-1 from Homo sapiens (Human).